We begin with the raw amino-acid sequence, 153 residues long: Arginine repressor (153 aa).

The protein belongs to the ArgR family.

The protein localises to the cytoplasm. The protein operates within amino-acid biosynthesis; L-arginine biosynthesis [regulation]. Functionally, regulates arginine biosynthesis genes. This Actinobacillus pleuropneumoniae serotype 5b (strain L20) protein is Arginine repressor.